Consider the following 1608-residue polypeptide: DNA-directed RNA polymerase III subunit rpc2 (1608 aa).

The Zn(2+) site is built by Cys1557, Cys1560, Cys1569, and Cys1572. Residues 1557–1572 form a C4-type zinc finger; it reads CKNCGFLGYEGYCQYC.

It belongs to the RNA polymerase beta chain family. In terms of assembly, component of the RNA polymerase III (Pol III) complex. In terms of processing, this protein undergoes a protein self splicing that involves a post-translational excision of the intervening region (intein) followed by peptide ligation.

Its subcellular location is the nucleus. The enzyme catalyses RNA(n) + a ribonucleoside 5'-triphosphate = RNA(n+1) + diphosphate. DNA-dependent RNA polymerase catalyzes the transcription of DNA into RNA using the four ribonucleoside triphosphates as substrates. Second largest core component of RNA polymerase III which synthesizes small RNAs, such as 5S rRNA and tRNAs. Proposed to contribute to the polymerase catalytic activity and forms the polymerase active center together with the largest subunit. Pol III is composed of mobile elements and rpc2 is part of the core element with the central large cleft and probably a clamp element that moves to open and close the cleft. The chain is DNA-directed RNA polymerase III subunit rpc2 (polr3b) from Dictyostelium discoideum (Social amoeba).